The sequence spans 340 residues: tRNA N6-adenosine threonylcarbamoyltransferase (340 aa).

Fe cation-binding residues include His-111 and His-115. Substrate-binding positions include 134 to 138 (LVSGG), Asp-167, Gly-180, and Asn-276. Asp-304 provides a ligand contact to Fe cation.

It belongs to the KAE1 / TsaD family. The cofactor is Fe(2+).

The protein resides in the cytoplasm. It carries out the reaction L-threonylcarbamoyladenylate + adenosine(37) in tRNA = N(6)-L-threonylcarbamoyladenosine(37) in tRNA + AMP + H(+). Functionally, required for the formation of a threonylcarbamoyl group on adenosine at position 37 (t(6)A37) in tRNAs that read codons beginning with adenine. Is involved in the transfer of the threonylcarbamoyl moiety of threonylcarbamoyl-AMP (TC-AMP) to the N6 group of A37, together with TsaE and TsaB. TsaD likely plays a direct catalytic role in this reaction. The protein is tRNA N6-adenosine threonylcarbamoyltransferase of Helicobacter pylori (strain Shi470).